Here is a 509-residue protein sequence, read N- to C-terminus: Scavenger receptor class B member 1 (509 aa).

Topologically, residues 1 to 11 are cytoplasmic; the sequence is MGVSSRARWVA. A helical membrane pass occupies residues 12–32; sequence LGLGVLGLLCAALGVIMILMV. The Extracellular segment spans residues 33 to 440; sequence PSLIKQQVLK…YTQLVLMPQV (408 aa). N-linked (GlcNAc...) asparagine glycosylation is found at N102, N108, N116, N173, N212, N227, N255, N310, N330, and N383. C251 and C384 are oxidised to a cystine. The chain crosses the membrane as a helical span at residues 441–461; that stretch reads LHYAQYVLLGLGGLLLLVPII. Topologically, residues 462–509 are cytoplasmic; sequence YQLRSQEKCFLFWSGSKKGSQDKEAMQAYSESLMSPAAKGTVLQEAKL.

The protein belongs to the CD36 family. In terms of assembly, the C-terminal region binds to PDZK1. In terms of processing, N-glycosylated. Post-translationally, the six cysteines of the extracellular domain are all involved in intramolecular disulfide bonds.

It is found in the cell membrane. The protein resides in the membrane. Its subcellular location is the caveola. Functionally, receptor for different ligands such as phospholipids, cholesterol ester, lipoproteins, phosphatidylserine and apoptotic cells. Receptor for HDL, mediating selective uptake of cholesteryl ether and HDL-dependent cholesterol efflux. Also facilitates the flux of free and esterified cholesterol between the cell surface and apoB-containing lipoproteins and modified lipoproteins, although less efficiently than HDL. May be involved in the phagocytosis of apoptotic cells, via its phosphatidylserine binding activity. This is Scavenger receptor class B member 1 (Scarb1) from Rattus norvegicus (Rat).